We begin with the raw amino-acid sequence, 311 residues long: Halocin-S8 (311 aa).

2 consecutive propeptides follow at residues 1–230 (MSDK…IQLQ) and 267–311 (TVAC…TSFW).

Its subcellular location is the secreted. Has antibacterial activity against the haloarchaeons H.salinarium NRC817, Halobacterium GRB and H.gibbonsii. This Haloarchaeon S8a protein is Halocin-S8 (halS8).